Consider the following 315-residue polypeptide: Calcium homeostasis modulator protein 6 (315 aa).

Residues 1-21 (MEKFRAVLDLHVKHHSALGYG) are Cytoplasmic-facing. Residues 22–37 (LVTLLTAGGERIFSAV) form a helical membrane-spanning segment. Residues 38–46 (AFQCPCSAA) lie on the Extracellular side of the membrane. 3 disulfide bridges follow: Cys41–Cys126, Cys43–Cys155, and Cys139–Cys146. The helical transmembrane segment at 47-68 (WNLPYGLVFLLVPALALFLLGY) threads the bilayer. Over 69-102 (VLSARTWRLLTGCCSSARASCGSALRGSLVCTQI) the chain is Cytoplasmic. A helical transmembrane segment spans residues 103–127 (SAAAALAPLTWVAVALLGGAFYECA). Residues 128-169 (ATGSAAFAQRLCLGRNRSCAAELPLVPCNQAKASDVQDLLKD) are Extracellular-facing. A helical transmembrane segment spans residues 170–192 (LKAQSQVLGWILIAVVIIILLIF). Residues 193-315 (TSVTRCLSPV…SSGINSTPEL (123 aa)) lie on the Cytoplasmic side of the membrane.

It belongs to the CALHM family. In terms of assembly, oligomerizes to form decameric and undecameric channels. In terms of processing, N-glycosylated. As to expression, placenta.

The protein localises to the cell membrane. The enzyme catalyses ATP(in) = ATP(out). Its function is as follows. Pore-forming subunit of an ATP-permeable channel. In response to pathogen-derived and proinflammatory stimuli, relocates from intracellular compartments to NK-dendritic cell and NK-macrophage immune synapses where it mediates ATP efflux and NK cell activation involved in antimicrobial and antitumor responses. May assemble to form gap junction channel-like structures with gating and ion conductance likely regulated by membrane lipids and voltage rather than by extracellular calcium levels. This is Calcium homeostasis modulator protein 6 from Homo sapiens (Human).